We begin with the raw amino-acid sequence, 275 residues long: Large ribosomal subunit protein uL2 (275 aa).

Residues 212–259 (RWKGIRPTNRGVTMNPVDHPHGGGEGKTSGGRHPVTPWGQPTRGYKTR) are disordered.

Belongs to the universal ribosomal protein uL2 family. In terms of assembly, part of the 50S ribosomal subunit. Forms a bridge to the 30S subunit in the 70S ribosome.

One of the primary rRNA binding proteins. Required for association of the 30S and 50S subunits to form the 70S ribosome, for tRNA binding and peptide bond formation. It has been suggested to have peptidyltransferase activity; this is somewhat controversial. Makes several contacts with the 16S rRNA in the 70S ribosome. This chain is Large ribosomal subunit protein uL2, found in Acidobacterium capsulatum (strain ATCC 51196 / DSM 11244 / BCRC 80197 / JCM 7670 / NBRC 15755 / NCIMB 13165 / 161).